A 141-amino-acid chain; its full sequence is Large ribosomal subunit protein uL11 (141 aa).

This sequence belongs to the universal ribosomal protein uL11 family. Part of the ribosomal stalk of the 50S ribosomal subunit. Interacts with L10 and the large rRNA to form the base of the stalk. L10 forms an elongated spine to which L12 dimers bind in a sequential fashion forming a multimeric L10(L12)X complex. In terms of processing, one or more lysine residues are methylated.

In terms of biological role, forms part of the ribosomal stalk which helps the ribosome interact with GTP-bound translation factors. This Limosilactobacillus reuteri (strain DSM 20016) (Lactobacillus reuteri) protein is Large ribosomal subunit protein uL11.